Reading from the N-terminus, the 404-residue chain is MTVKTPVYLDYAATTTVDKRVAEKMIPYLTETFGNPASNSHAFGWEAEEAVEKARADIAALINADPKEIVFTSGATESDNLAIKGAANFYKTKGKHLITVKTEHKAVLDTMRELERQGFEVTYLGVQENGLIDLEELKAAIRDDTILVSVMWANNEIGVVQDIPAIGEICRERKIVFHVDAAQACGKVPVDVEAAKIDLLSMSAHKVYGPKGIGALYVRRKPRVRLEAQMHGGGHERGFRSGTLPTHQIVGMGEAFRIAKEELEQDMAHYRKLRDIFLKGIEGIEEVYINGDLEHRVPNNLNVSFNFVEGESLIMAVKELAVSSGSACTSASLEPSYVLRALGRNDELAHSSLRITFGRMTTEEEVQFAAELIKSKIGKLRELSPLWEMFKDGIDLNSIEWAAH.

Pyridoxal 5'-phosphate is bound by residues 75–76 (AT), N155, Q183, and 203–205 (SAH). K206 is modified (N6-(pyridoxal phosphate)lysine). T243 contributes to the pyridoxal 5'-phosphate binding site. Catalysis depends on C328, which acts as the Cysteine persulfide intermediate. C328 is a [2Fe-2S] cluster binding site.

This sequence belongs to the class-V pyridoxal-phosphate-dependent aminotransferase family. NifS/IscS subfamily. Homodimer. Forms a heterotetramer with IscU, interacts with other sulfur acceptors. Pyridoxal 5'-phosphate is required as a cofactor.

The protein localises to the cytoplasm. It carries out the reaction (sulfur carrier)-H + L-cysteine = (sulfur carrier)-SH + L-alanine. It participates in cofactor biosynthesis; iron-sulfur cluster biosynthesis. Its function is as follows. Master enzyme that delivers sulfur to a number of partners involved in Fe-S cluster assembly, tRNA modification or cofactor biosynthesis. Catalyzes the removal of elemental sulfur atoms from cysteine to produce alanine. Functions as a sulfur delivery protein for Fe-S cluster synthesis onto IscU, an Fe-S scaffold assembly protein, as well as other S acceptor proteins. This chain is Cysteine desulfurase IscS, found in Neisseria meningitidis serogroup A / serotype 4A (strain DSM 15465 / Z2491).